The primary structure comprises 1940 residues: Myosin-13 (1940 aa).

Positions 33–82 (DSKKACFAMDDKEMYVKGMIQSRENDKVTVKTLDDRTLTLNSDQVFPMNP) constitute a Myosin N-terminal SH3-like domain. Positions 86 to 782 (DKIEDMAMMT…LLGLLEEMRD (697 aa)) constitute a Myosin motor domain. Position 130 is an N6,N6,N6-trimethyllysine (Lys130). 179–186 (GESGAGKT) contributes to the ATP binding site. 2 actin-binding regions span residues 659 to 681 (LNKLMTNLRSTHPHFVRCLIPNE) and 761 to 775 (RFGHTKVFFKAGLLG). An IQ domain is found at 785–814 (LVTLMTRTQAICRGYLMRVEFKKMMERRES). A coiled-coil region spans residues 843 to 1940 (LLKSAEAERE…RDVGAQKMEE (1098 aa)). Residues 1886-1940 (RQAEEAEEQANTQMSKCRRVQHELEEAEERADIAESQVNKLRAKSRDVGAQKMEE) are disordered. Basic and acidic residues predominate over residues 1929–1940 (KSRDVGAQKMEE).

This sequence belongs to the TRAFAC class myosin-kinesin ATPase superfamily. Myosin family. Muscle myosin is a hexameric protein that consists of 2 heavy chain subunits (MHC), 2 alkali light chain subunits (MLC) and 2 regulatory light chain subunits (MLC-2).

It localises to the cytoplasm. Its subcellular location is the myofibril. In terms of biological role, fast twitching myosin mediating the high-velocity and low-tension contractions of specific striated muscles. The sequence is that of Myosin-13 (MYH13) from Canis lupus familiaris (Dog).